We begin with the raw amino-acid sequence, 153 residues long: Urease accessory protein UreE (153 aa).

This sequence belongs to the UreE family.

The protein localises to the cytoplasm. Involved in urease metallocenter assembly. Binds nickel. Probably functions as a nickel donor during metallocenter assembly. The polypeptide is Urease accessory protein UreE (Acetivibrio thermocellus (strain ATCC 27405 / DSM 1237 / JCM 9322 / NBRC 103400 / NCIMB 10682 / NRRL B-4536 / VPI 7372) (Clostridium thermocellum)).